A 728-amino-acid polypeptide reads, in one-letter code: E3 ubiquitin-protein ligase TRIM36 (728 aa).

Residues 33–84 form an RING-type; degenerate zinc finger; sequence CPACKELFTHPLILPCQHSICHKCVKELLLTLDDSFNDVGSDNSNQSSPRLR. B box-type zinc fingers lie at residues 154-192 and 207-249; these read AIMCDLCKPPPQESTKSCMDCSASYCNECFKIHHPWGTI and PKIL…VTTM. The Zn(2+) site is built by cysteine 212, histidine 215, cysteine 235, and histidine 241. A coiled-coil region spans residues 271 to 345; sequence ESQVKSQISE…MEEYQGLLEN (75 aa). The COS domain maps to 356–413; sequence LKETDQSCFVQTAKQLHLRIQKATESLKSFRPAAQTSFEDYVVNTSKQTELLGELSFF. The Fibronectin type-III domain maps to 419–510; it reads VPEINEEQSK…RELILHTPPA (92 aa). The region spanning 508-720 is the B30.2/SPRY domain; it reads PPAPVFSFLF…IQLEEPITAK (213 aa).

The protein belongs to the TRIM/RBCC family. As to quaternary structure, interacts with CENPH. In terms of tissue distribution, highly expressed in testis, prostate and brain. Weakly expressed in kidney, lung and heart. Expressed in fetal tissues.

The protein resides in the cytoplasm. It localises to the cytoplasmic vesicle. It is found in the secretory vesicle. The protein localises to the acrosome. Its subcellular location is the cytoskeleton. The catalysed reaction is S-ubiquitinyl-[E2 ubiquitin-conjugating enzyme]-L-cysteine + [acceptor protein]-L-lysine = [E2 ubiquitin-conjugating enzyme]-L-cysteine + N(6)-ubiquitinyl-[acceptor protein]-L-lysine.. In terms of biological role, E3 ubiquitin-protein ligase which mediates ubiquitination and subsequent proteasomal degradation of target proteins. Involved in chromosome segregation and cell cycle regulation. May play a role in the acrosome reaction and fertilization. The polypeptide is E3 ubiquitin-protein ligase TRIM36 (TRIM36) (Homo sapiens (Human)).